The chain runs to 361 residues: Prostaglandin D2 receptor (361 aa).

Topologically, residues 1 to 21 are extracellular; sequence MRPLFYRCHNTTSVEKGNSAT. Asn10 is a glycosylation site (N-linked (GlcNAc...) asparagine). A helical transmembrane segment spans residues 22-42; sequence MGGVLFSTGLVGNLLALGLLA. Topologically, residues 43-58 are cytoplasmic; that stretch reads RSGLGSCPPRSPRPPP. A helical membrane pass occupies residues 59-79; that stretch reads SVFYVLVFGLTITDLLGKCLV. Over 80-107 the chain is Extracellular; it reads SPFVLSAYAQNRSLRELVPGSDSSLCQA. An N-linked (GlcNAc...) asparagine glycan is attached at Asn90. Residues Cys105 and Cys183 are joined by a disulfide bond. A helical transmembrane segment spans residues 108-128; sequence FAFIMSFFGLASTLQLLAMAL. The Cytoplasmic segment spans residues 129-150; it reads ECWLSLGHPFFHRRHLTPRRGA. A helical transmembrane segment spans residues 151-171; sequence MVAPVVGAFCLAFCALPLVGF. The Extracellular portion of the chain corresponds to 172–195; it reads GKFVQYCPGTWCFFQMVHEERSLS. A helical transmembrane segment spans residues 196 to 216; the sequence is VLSYSVLYASLMLLLVLAIVL. Residues 217-262 are Cytoplasmic-facing; it reads CNLSAMRNLYAMHLRLRGLLRPGSRERAEPGAGEREATPLHLEELD. The helical transmembrane segment at 263–283 threads the bilayer; that stretch reads HLLLLALMTVLFTMCSLPLIY. The Extracellular portion of the chain corresponds to 284-310; the sequence is RAYYGAFKAVPEQNGTTEETEDLRALR. N-linked (GlcNAc...) asparagine glycosylation is present at Asn297. The helical transmembrane segment at 311-331 threads the bilayer; that stretch reads FLSVISIVDPWIFIIFRTSVF. Residues 332–361 lie on the Cytoplasmic side of the membrane; that stretch reads RMFFRKIFIRPLIYRNWHSNSCQTNMESSL.

The protein belongs to the G-protein coupled receptor 1 family.

Its subcellular location is the cell membrane. Receptor for prostaglandin D2 (PGD2). The activity of this receptor is mainly mediated by G(s) proteins that stimulate adenylate cyclase, resulting in an elevation of intracellular cAMP. A mobilization of calcium is also observed, but without formation of inositol 1,4,5-trisphosphate. Involved in PLA2G3-dependent maturation of mast cells. PLA2G3 is secreted by immature mast cells and acts on nearby fibroblasts upstream to PTDGS to synthesize PGD2, which in turn promotes mast cell maturation and degranulation via PTGDR. This is Prostaglandin D2 receptor (PTGDR) from Bos taurus (Bovine).